The following is a 328-amino-acid chain: Probable GDP-L-fucose synthase 1 (328 aa).

25 to 31 (GHRGLVG) serves as a coordination point for NADP(+). The active-site Proton donor/acceptor is Tyr-152. Residues Lys-156, 179-182 (PTNL), and His-195 contribute to the NADP(+) site. Substrate-binding residues include Arg-203, Trp-218, Arg-225, and Asp-285.

This sequence belongs to the NAD(P)-dependent epimerase/dehydratase family. Fucose synthase subfamily. In terms of assembly, homodimer.

The catalysed reaction is GDP-beta-L-fucose + NADP(+) = GDP-4-dehydro-alpha-D-rhamnose + NADPH + H(+). The protein operates within nucleotide-sugar biosynthesis; GDP-L-fucose biosynthesis via de novo pathway; GDP-L-fucose from GDP-alpha-D-mannose: step 2/2. Functionally, catalyzes the two-step NADP-dependent conversion of GDP-4-dehydro-6-deoxy-D-mannose to GDP-fucose, involving an epimerase and a reductase reaction. This is Probable GDP-L-fucose synthase 1 from Oryza sativa subsp. japonica (Rice).